Reading from the N-terminus, the 152-residue chain is SXP/RAL-2 family protein Ani s 5 (152 aa).

An N-terminal signal peptide occupies residues methionine 1 to alanine 18. 4 necessary for IgE-binding regions span residues proline 25 to leucine 42, lysine 49 to isoleucine 54, leucine 58 to glycine 66, and lysine 103 to glycine 120. IgG4-binding stretches follow at residues lysine 49–aspartate 68 and leucine 118–serine 137. The igE-binding and IgG4-binding stretch occupies residues isoleucine 127–isoleucine 146.

This sequence belongs to the SXP/RAL-2 family. Monomer. In terms of tissue distribution, excretory gland, ventriculus, and the luminal epithelium of the intestine of the larvae.

It localises to the secreted. The polypeptide is SXP/RAL-2 family protein Ani s 5 (Anisakis simplex (Herring worm)).